Reading from the N-terminus, the 103-residue chain is Large ribosomal subunit protein bL21 (103 aa).

The protein belongs to the bacterial ribosomal protein bL21 family. In terms of assembly, part of the 50S ribosomal subunit. Contacts protein L20.

Functionally, this protein binds to 23S rRNA in the presence of protein L20. The sequence is that of Large ribosomal subunit protein bL21 from Saccharophagus degradans (strain 2-40 / ATCC 43961 / DSM 17024).